Here is a 207-residue protein sequence, read N- to C-terminus: Small ribosomal subunit protein uS4 (207 aa).

Over residues 31–40 (KCRLDNKPGQ) the composition is skewed to basic and acidic residues. The disordered stretch occupies residues 31-56 (KCRLDNKPGQDGRTSGSRTSDYGNQL). Residues 42–53 (GRTSGSRTSDYG) show a composition bias toward polar residues. In terms of domain architecture, S4 RNA-binding spans 97 to 158 (SRLDNVVYRM…KAKKQARITE (62 aa)).

Belongs to the universal ribosomal protein uS4 family. In terms of assembly, part of the 30S ribosomal subunit. Contacts protein S5. The interaction surface between S4 and S5 is involved in control of translational fidelity.

One of the primary rRNA binding proteins, it binds directly to 16S rRNA where it nucleates assembly of the body of the 30S subunit. Functionally, with S5 and S12 plays an important role in translational accuracy. The chain is Small ribosomal subunit protein uS4 from Polynucleobacter necessarius subsp. necessarius (strain STIR1).